A 122-amino-acid polypeptide reads, in one-letter code: Large ribosomal subunit protein uL14c (122 aa).

The protein belongs to the universal ribosomal protein uL14 family. In terms of assembly, part of the 50S ribosomal subunit.

The protein localises to the plastid. Its subcellular location is the chloroplast. Binds to 23S rRNA. The polypeptide is Large ribosomal subunit protein uL14c (rpl14) (Bigelowiella natans (Pedinomonas minutissima)).